Here is a 79-residue protein sequence, read N- to C-terminus: MSLKSLVRKVFSFLLLIPIYFYRVCISPLTPPSCRFTPTCSAYAVEAIKKHGPVKGLYLAVRRILRCHPWGGSGYDPVP.

Belongs to the UPF0161 family.

The protein resides in the cell inner membrane. Functionally, could be involved in insertion of integral membrane proteins into the membrane. This is Putative membrane protein insertion efficiency factor from Bacteroides thetaiotaomicron (strain ATCC 29148 / DSM 2079 / JCM 5827 / CCUG 10774 / NCTC 10582 / VPI-5482 / E50).